The chain runs to 129 residues: Lysozyme C (129 aa).

The C-type lysozyme domain occupies K1–L129. Intrachain disulfides connect C6/C127, C30/C115, C64/C80, and C76/C94. Active-site residues include E35 and D52.

Belongs to the glycosyl hydrolase 22 family. Monomer.

Its subcellular location is the secreted. It carries out the reaction Hydrolysis of (1-&gt;4)-beta-linkages between N-acetylmuramic acid and N-acetyl-D-glucosamine residues in a peptidoglycan and between N-acetyl-D-glucosamine residues in chitodextrins.. Its function is as follows. Lysozymes have primarily a bacteriolytic function; those in tissues and body fluids are associated with the monocyte-macrophage system and enhance the activity of immunoagents. The polypeptide is Lysozyme C (LYZ) (Tragopan temminckii (Temminck's tragopan)).